We begin with the raw amino-acid sequence, 197 residues long: HTH-type transcriptional regulator BetI (197 aa).

Residues 8–68 enclose the HTH tetR-type domain; the sequence is PIRRQQLIEA…ATMRYLMSVL (61 aa). Residues 31–50 constitute a DNA-binding region (H-T-H motif); the sequence is SIALIARLAGVSNGIISHYF.

It functions in the pathway amine and polyamine biosynthesis; betaine biosynthesis via choline pathway [regulation]. Repressor involved in the biosynthesis of the osmoprotectant glycine betaine. It represses transcription of the choline transporter BetT and the genes of BetAB involved in the synthesis of glycine betaine. In Pseudomonas fluorescens (strain Pf0-1), this protein is HTH-type transcriptional regulator BetI.